Reading from the N-terminus, the 277-residue chain is Large ribosomal subunit protein uL2 (277 aa).

The disordered stretch occupies residues 219–277 (TVRGSVMNPNDHPHGGGEGRSPIGHPSPRTPWGKPALGYKTRKNKKYSDRFIVKRRHDK).

Belongs to the universal ribosomal protein uL2 family. As to quaternary structure, part of the 50S ribosomal subunit. Forms a bridge to the 30S subunit in the 70S ribosome.

Functionally, one of the primary rRNA binding proteins. Required for association of the 30S and 50S subunits to form the 70S ribosome, for tRNA binding and peptide bond formation. It has been suggested to have peptidyltransferase activity; this is somewhat controversial. Makes several contacts with the 16S rRNA in the 70S ribosome. The chain is Large ribosomal subunit protein uL2 from Clostridium botulinum (strain 657 / Type Ba4).